The following is a 524-amino-acid chain: Protein tweety homolog 3 (524 aa).

The Extracellular portion of the chain corresponds to 1-42 (MAGVSYAAPWWVSLLHRLPHFDLRWEATSSQFRPEDADYQQA). A helical transmembrane segment spans residues 43–63 (LLLLGATALACLALDLLFLLF). The Cytoplasmic segment spans residues 64–86 (YSFWLCCRRRKTDEHLDADCCCT). Residues 87–107 (AWCVIITTLVCSAGIAVGFYG) form a helical membrane-spanning segment. Topologically, residues 108 to 211 (NGETSDGIHR…VDLYDWYRWL (104 aa)) are extracellular. Residues Glu-110 and Asp-113 each coordinate Ca(2+). Asn-126 and Asn-144 each carry an N-linked (GlcNAc...) asparagine glycan. The helical transmembrane segment at 212-232 (GYLGLLLLDVIICLLVLVGLI) threads the bilayer. The Cytoplasmic portion of the chain corresponds to 233–236 (RSSK). The helical transmembrane segment at 237-257 (GILVGVCLLGVLALVISWGAL) threads the bilayer. Residues 258-386 (GLELAVSVGS…LTGFCYDGVE (129 aa)) lie on the Extracellular side of the membrane. 2 cysteine pairs are disulfide-bonded: Cys-271-Cys-381 and Cys-299-Cys-366. Asn-351 carries an N-linked (GlcNAc...) asparagine glycan. The helical transmembrane segment at 387–407 (GLIYLALFSFVTALMFSSIVC) threads the bilayer. Residues 408 to 524 (SIPHTWQQKR…PRPDSSGSGH (117 aa)) lie on the Cytoplasmic side of the membrane. Disordered regions lie at residues 413–435 (WQQKRGPDDDGEEETAPGPRQAH) and 485–524 (RCENTPLIGRESPPPSYTSSMRAKYLATSQPRPDSSGSGH). Position 496 is a phosphoserine (Ser-496). Residues 498-501 (PPSY) carry the PY-motif; mediates interaction with NEDD4L motif. Residues 501-524 (YTSSMRAKYLATSQPRPDSSGSGH) show a composition bias toward polar residues. Phosphoserine is present on residues Ser-504 and Ser-522.

It belongs to the tweety family. Homotetramer; disulfide-linked. Forms cis-homodimers in the presence of Ca(2+). Interacts with NEDD4L. Ubiquitinated by NEDD4L. Post-translationally, N-glycosylated. As to expression, expressed in excitable tissues. Expressed in the brain, heart, skeletal muscle, colon, spleen, kidney and peripheral blood leukocytes. Also expressed in fat, the pancreas, thymus, and uterus.

Its subcellular location is the cell membrane. It catalyses the reaction chloride(in) = chloride(out). The catalysed reaction is L-glutamate(out) = L-glutamate(in). Its activity is regulated as follows. Inhibited by (4-[(2-butyl-6,7-dichloro-2- cyclopentyl-2,3-dihydro-1-oxo-1H-inden-5-yl)oxy]butanoic acid), genistein and PD98059 (MEK1 inhibitor). In terms of biological role, calcium-independent, swelling-dependent volume-regulated anion channel (VRAC-swell) which plays a pivotal role in the process of regulatory volume decrease (RVD) in the brain through the efflux of anions like chloride and organic osmolytes like glutamate. Probable large-conductance Ca(2+)-activated chloride channel. This is Protein tweety homolog 3 (Ttyh3) from Mus musculus (Mouse).